The sequence spans 393 residues: Probable WRKY transcription factor 25 (393 aa).

The segment at residues 160–224 is a DNA-binding region (WRKY 1); the sequence is MVSRNSNDGY…YKGGHNHPKP (65 aa). Residues C191, C196, H219, and H221 each coordinate Zn(2+). 2 disordered regions span residues 217–242 and 277–303; these read GGHN…VNGR and SEYG…DEGM. Positions 229-240 are enriched in polar residues; that stretch reads RPSQSSLPSSVN. Residues 289–298 are compositionally biased toward basic and acidic residues; it reads PEMKRMKREG. The WRKY 2 DNA-binding region spans 322–387; sequence SDIDVLIDGF…YEGRHNHDIP (66 aa). 4 residues coordinate Zn(2+): C353, C358, H382, and H384.

It belongs to the WRKY group I family. In terms of assembly, interacts with MKS1. Interacts with SIB1. Interacts with VQ10 and CAMBP25/VQ15. Phosphorylated by MPK4. In terms of tissue distribution, highly expressed in roots and at lower levels in leaves, stems and seeds.

It localises to the nucleus. Functionally, transcription factor. Interacts specifically with the W box (5'-(T)TGAC[CT]-3'), a frequently occurring elicitor-responsive cis-acting element. Functions with WRKY33 as positive regulator of salt stress response and abscisic acid (ABA) signaling. Plays a partial role in heat stress tolerance. Functions with WRKY26 and WRKY33 as positive regulator of plant thermotolerance by partially participating in ethylene-response signal transduction pathway. This is Probable WRKY transcription factor 25 (WRKY25) from Arabidopsis thaliana (Mouse-ear cress).